The primary structure comprises 297 residues: Undecaprenyl-diphosphatase 3 (297 aa).

The next 6 membrane-spanning stretches (helical) occupy residues 39–59, 89–109, 118–138, 203–223, 237–257, and 268–288; these read PGAAFTAVTQIGTETAVLIYF, WLVLLGTIPIGLLGVTLQDAI, LIATTLIVLGLILGGADWYAS, FLLAMPAVLASGVFELKSIGG, PTIVATVVAFATGYAAIAWFL, and FVLYRVALGLLLLALLAGGAI.

Belongs to the UppP family.

It is found in the cell membrane. The catalysed reaction is di-trans,octa-cis-undecaprenyl diphosphate + H2O = di-trans,octa-cis-undecaprenyl phosphate + phosphate + H(+). Its function is as follows. Catalyzes the dephosphorylation of undecaprenyl diphosphate (UPP). Confers resistance to bacitracin. The sequence is that of Undecaprenyl-diphosphatase 3 from Frankia alni (strain DSM 45986 / CECT 9034 / ACN14a).